The chain runs to 87 residues: Small ribosomal subunit protein bS18 (87 aa).

The protein belongs to the bacterial ribosomal protein bS18 family. As to quaternary structure, part of the 30S ribosomal subunit. Forms a tight heterodimer with protein bS6.

Binds as a heterodimer with protein bS6 to the central domain of the 16S rRNA, where it helps stabilize the platform of the 30S subunit. The chain is Small ribosomal subunit protein bS18 from Sulfurovum sp. (strain NBC37-1).